The primary structure comprises 109 residues: Large ribosomal subunit protein uL24 (109 aa).

It belongs to the universal ribosomal protein uL24 family. In terms of assembly, part of the 50S ribosomal subunit.

Its function is as follows. One of two assembly initiator proteins, it binds directly to the 5'-end of the 23S rRNA, where it nucleates assembly of the 50S subunit. In terms of biological role, one of the proteins that surrounds the polypeptide exit tunnel on the outside of the subunit. This Syntrophotalea carbinolica (strain DSM 2380 / NBRC 103641 / GraBd1) (Pelobacter carbinolicus) protein is Large ribosomal subunit protein uL24.